A 114-amino-acid polypeptide reads, in one-letter code: Large ribosomal subunit protein bL20 (114 aa).

It belongs to the bacterial ribosomal protein bL20 family.

Its function is as follows. Binds directly to 23S ribosomal RNA and is necessary for the in vitro assembly process of the 50S ribosomal subunit. It is not involved in the protein synthesizing functions of that subunit. This is Large ribosomal subunit protein bL20 from Flavobacterium psychrophilum (strain ATCC 49511 / DSM 21280 / CIP 103535 / JIP02/86).